Consider the following 249-residue polypeptide: 5'-nucleotidase SurE (249 aa).

Residues aspartate 9, aspartate 10, serine 40, and asparagine 92 each contribute to the a divalent metal cation site.

The protein belongs to the SurE nucleotidase family. It depends on a divalent metal cation as a cofactor.

Its subcellular location is the cytoplasm. It catalyses the reaction a ribonucleoside 5'-phosphate + H2O = a ribonucleoside + phosphate. Functionally, nucleotidase that shows phosphatase activity on nucleoside 5'-monophosphates. The sequence is that of 5'-nucleotidase SurE from Shewanella oneidensis (strain ATCC 700550 / JCM 31522 / CIP 106686 / LMG 19005 / NCIMB 14063 / MR-1).